The chain runs to 240 residues: 1-(5-phosphoribosyl)-5-[(5-phosphoribosylamino)methylideneamino] imidazole-4-carboxamide isomerase (240 aa).

Asp8 functions as the Proton acceptor in the catalytic mechanism. The Proton donor role is filled by Asp129.

It belongs to the HisA/HisF family.

The protein resides in the cytoplasm. The enzyme catalyses 1-(5-phospho-beta-D-ribosyl)-5-[(5-phospho-beta-D-ribosylamino)methylideneamino]imidazole-4-carboxamide = 5-[(5-phospho-1-deoxy-D-ribulos-1-ylimino)methylamino]-1-(5-phospho-beta-D-ribosyl)imidazole-4-carboxamide. It participates in amino-acid biosynthesis; L-histidine biosynthesis; L-histidine from 5-phospho-alpha-D-ribose 1-diphosphate: step 4/9. The sequence is that of 1-(5-phosphoribosyl)-5-[(5-phosphoribosylamino)methylideneamino] imidazole-4-carboxamide isomerase from Dinoroseobacter shibae (strain DSM 16493 / NCIMB 14021 / DFL 12).